Here is a 252-residue protein sequence, read N- to C-terminus: ATP synthase subunit a (252 aa).

The next 6 helical transmembrane spans lie at 29–49 (FTNS…FLFL), 87–107 (FFPL…LGLF), 117–137 (IIVT…YGFM), 146–166 (LFVP…IEVI), 188–208 (ITLK…AVGV), and 211–231 (SILP…VAFL).

Belongs to the ATPase A chain family. In terms of assembly, F-type ATPases have 2 components, CF(1) - the catalytic core - and CF(0) - the membrane proton channel. CF(1) has five subunits: alpha(3), beta(3), gamma(1), delta(1), epsilon(1). CF(0) has three main subunits: a(1), b(2) and c(9-12). The alpha and beta chains form an alternating ring which encloses part of the gamma chain. CF(1) is attached to CF(0) by a central stalk formed by the gamma and epsilon chains, while a peripheral stalk is formed by the delta and b chains.

The protein localises to the cell inner membrane. In terms of biological role, key component of the proton channel; it plays a direct role in the translocation of protons across the membrane. The sequence is that of ATP synthase subunit a from Mesorhizobium japonicum (strain LMG 29417 / CECT 9101 / MAFF 303099) (Mesorhizobium loti (strain MAFF 303099)).